The sequence spans 555 residues: Hydrogenase-4 component G (555 aa).

This sequence belongs to the complex I 49 kDa subunit family. It depends on [4Fe-4S] cluster as a cofactor.

Its function is as follows. Possible component of hydrogenase 4. The protein is Hydrogenase-4 component G of Escherichia coli (strain K12).